Reading from the N-terminus, the 489-residue chain is GTPase Der (489 aa).

2 consecutive EngA-type G domains span residues 3–166 and 200–373; these read PVVA…AEAM and IKLA…ESAT. Residues 9-16, 56-60, 118-121, 206-213, 253-257, and 318-321 each bind GTP; these read GRPNVGKS, DTGGI, NKVD, GKPNVGKS, DTAGV, and NKWD. The 85-residue stretch at 374–458 folds into the KH-like domain; it reads RRVSTSMLTR…PIQVRFQEGG (85 aa).

It belongs to the TRAFAC class TrmE-Era-EngA-EngB-Septin-like GTPase superfamily. EngA (Der) GTPase family. In terms of assembly, associates with the 50S ribosomal subunit.

In terms of biological role, GTPase that plays an essential role in the late steps of ribosome biogenesis. The polypeptide is GTPase Der (Shewanella loihica (strain ATCC BAA-1088 / PV-4)).